Reading from the N-terminus, the 327-residue chain is Phenylalanine--tRNA ligase alpha subunit (327 aa).

A Mg(2+)-binding site is contributed by Glu-252.

Belongs to the class-II aminoacyl-tRNA synthetase family. Phe-tRNA synthetase alpha subunit type 1 subfamily. In terms of assembly, tetramer of two alpha and two beta subunits. The cofactor is Mg(2+).

It localises to the cytoplasm. It catalyses the reaction tRNA(Phe) + L-phenylalanine + ATP = L-phenylalanyl-tRNA(Phe) + AMP + diphosphate + H(+). The polypeptide is Phenylalanine--tRNA ligase alpha subunit (Vibrio vulnificus (strain CMCP6)).